The following is a 62-amino-acid chain: Photosystem II reaction center protein Z (62 aa).

2 consecutive transmembrane segments (helical) span residues 8-28 (AVFASIAIPFIPVIGVPAVFA) and 41-61 (FSGATPRIGPVPLVGILNSSV).

The protein belongs to the PsbZ family. In terms of assembly, PSII is composed of 1 copy each of membrane proteins PsbA, PsbB, PsbC, PsbD, PsbE, PsbF, PsbH, PsbI, PsbJ, PsbK, PsbL, PsbM, PsbT, PsbY, PsbZ, Psb30/Ycf12, at least 3 peripheral proteins of the oxygen-evolving complex and a large number of cofactors. It forms dimeric complexes.

It is found in the plastid. Its subcellular location is the chloroplast thylakoid membrane. May control the interaction of photosystem II (PSII) cores with the light-harvesting antenna, regulates electron flow through the 2 photosystem reaction centers. PSII is a light-driven water plastoquinone oxidoreductase, using light energy to abstract electrons from H(2)O, generating a proton gradient subsequently used for ATP formation. The protein is Photosystem II reaction center protein Z of Selaginella uncinata (Blue spike-moss).